The chain runs to 617 residues: Electron transfer flavoprotein-ubiquinone oxidoreductase, mitochondrial (617 aa).

Residues 1–33 (MLVPLAKLSCPAYQCFHALKIKKNYLPLCATRW) constitute a mitochondrion transit peptide. 71-85 (VVIVGAGPAGLSAAV) is a binding site for FAD. Lys-96 is subject to N6-acetyllysine. Residues 109–130 (IGAHTLSGACLDPGAFKELFPD) lie within the membrane without spanning it. An N6-acetyllysine mark is found at Lys-132 and Lys-223. A ubiquinone is bound by residues Gly-305 and Gly-306. An N6-acetyllysine modification is found at Lys-357. Residues 428–447 (MGLHVTEYEDNLKNSWVWKE) lie within the membrane without spanning it. Ser-551 is modified (phosphoserine). The [4Fe-4S] cluster site is built by Cys-561, Cys-586, Cys-589, and Cys-592. The region spanning 577–606 (FRLQINAQNCVHCKTCDIKDPSQNINWVVP) is the 4Fe-4S ferredoxin-type domain.

Belongs to the ETF-QO/FixC family. In terms of assembly, monomer. [4Fe-4S] cluster serves as cofactor. The cofactor is FAD.

The protein localises to the mitochondrion inner membrane. The enzyme catalyses a ubiquinone + reduced [electron-transfer flavoprotein] = a ubiquinol + oxidized [electron-transfer flavoprotein] + H(+). Its function is as follows. Accepts electrons from ETF and reduces ubiquinone. This chain is Electron transfer flavoprotein-ubiquinone oxidoreductase, mitochondrial (ETFDH), found in Pongo abelii (Sumatran orangutan).